The chain runs to 285 residues: Stress response regulator protein 1 (285 aa).

Composition is skewed to low complexity over residues 43-58 and 128-138; these read DTSSQNDSISTQSSNN and SIISSKSSNKS. 2 disordered regions span residues 43 to 66 and 114 to 142; these read DTSSQNDSISTQSSNNDDTHSDQQ and PLTPFDDQTTSPQDSIISSKSSNKSTTVV. The region spanning 158 to 276 is the Response regulatory domain; it reads SFLIVDDNII…LDFMANSIDD (119 aa). Asp-209 bears the 4-aspartylphosphate mark.

In terms of biological role, required for stress adaptation, morphogenesis and virulence. The chain is Stress response regulator protein 1 (SRR1) from Candida dubliniensis (strain CD36 / ATCC MYA-646 / CBS 7987 / NCPF 3949 / NRRL Y-17841) (Yeast).